Here is a 423-residue protein sequence, read N- to C-terminus: Serine--tRNA ligase (423 aa).

Residue 231 to 233 participates in L-serine binding; sequence TGE. 262–264 is an ATP binding site; sequence RSE. Glu285 contacts L-serine. 349–352 lines the ATP pocket; sequence EISS. Ser385 lines the L-serine pocket.

It belongs to the class-II aminoacyl-tRNA synthetase family. Type-1 seryl-tRNA synthetase subfamily. As to quaternary structure, homodimer. The tRNA molecule binds across the dimer.

The protein localises to the cytoplasm. It catalyses the reaction tRNA(Ser) + L-serine + ATP = L-seryl-tRNA(Ser) + AMP + diphosphate + H(+). It carries out the reaction tRNA(Sec) + L-serine + ATP = L-seryl-tRNA(Sec) + AMP + diphosphate + H(+). The protein operates within aminoacyl-tRNA biosynthesis; selenocysteinyl-tRNA(Sec) biosynthesis; L-seryl-tRNA(Sec) from L-serine and tRNA(Sec): step 1/1. Its function is as follows. Catalyzes the attachment of serine to tRNA(Ser). Is also able to aminoacylate tRNA(Sec) with serine, to form the misacylated tRNA L-seryl-tRNA(Sec), which will be further converted into selenocysteinyl-tRNA(Sec). The chain is Serine--tRNA ligase from Coxiella burnetii (strain CbuK_Q154) (Coxiella burnetii (strain Q154)).